The following is a 600-amino-acid chain: Methionine--tRNA ligase (600 aa).

Positions 11–21 (PYANGPRHIGH) match the 'HIGH' region motif. Zn(2+) is bound by residues Cys143, Cys146, Cys156, and Cys159. A 'KMSKS' region motif is present at residues 351 to 355 (KFSSS). Ser354 lines the ATP pocket.

This sequence belongs to the class-I aminoacyl-tRNA synthetase family. MetG type 1 subfamily. Monomer. Zn(2+) serves as cofactor.

Its subcellular location is the cytoplasm. The catalysed reaction is tRNA(Met) + L-methionine + ATP = L-methionyl-tRNA(Met) + AMP + diphosphate. Is required not only for elongation of protein synthesis but also for the initiation of all mRNA translation through initiator tRNA(fMet) aminoacylation. In Salinispora arenicola (strain CNS-205), this protein is Methionine--tRNA ligase.